Consider the following 346-residue polypeptide: 3 beta-hydroxysteroid dehydrogenase/Delta 5--&gt;4-isomerase (346 aa).

Tyr147 serves as the catalytic Proton acceptor. Residue Lys151 participates in NAD(+) binding.

Belongs to the 3-beta-HSD family.

The catalysed reaction is a 3beta-hydroxy-Delta(5)-steroid + NAD(+) = a 3-oxo-Delta(5)-steroid + NADH + H(+). It catalyses the reaction a 3-oxo-Delta(5)-steroid = a 3-oxo-Delta(4)-steroid. It participates in lipid metabolism; steroid biosynthesis. Functionally, catalyzes the oxidative conversion of Delta(5)-ene-3-beta-hydroxy steroid, and the oxidative conversion of ketosteroids. The 3-beta-HSD enzymatic system plays a crucial role in the biosynthesis of all classes of hormonal steroids. During viral infection, steroid production contributes to virulence by inhibiting the host inflammatory response. The chain is 3 beta-hydroxysteroid dehydrogenase/Delta 5--&gt;4-isomerase (OPG174) from Monkeypox virus.